A 338-amino-acid chain; its full sequence is Nicotinate-nucleotide--dimethylbenzimidazole phosphoribosyltransferase (338 aa).

The Proton acceptor role is filled by Glu-305.

The protein belongs to the CobT family.

The catalysed reaction is 5,6-dimethylbenzimidazole + nicotinate beta-D-ribonucleotide = alpha-ribazole 5'-phosphate + nicotinate + H(+). It participates in nucleoside biosynthesis; alpha-ribazole biosynthesis; alpha-ribazole from 5,6-dimethylbenzimidazole: step 1/2. Its function is as follows. Catalyzes the synthesis of alpha-ribazole-5'-phosphate from nicotinate mononucleotide (NAMN) and 5,6-dimethylbenzimidazole (DMB). In Sinorhizobium medicae (strain WSM419) (Ensifer medicae), this protein is Nicotinate-nucleotide--dimethylbenzimidazole phosphoribosyltransferase.